The chain runs to 311 residues: Ribosomal RNA small subunit methyltransferase H (311 aa).

Residues 41 to 43 (GGH), D61, F85, D102, and Q109 each bind S-adenosyl-L-methionine.

The protein belongs to the methyltransferase superfamily. RsmH family.

It is found in the cytoplasm. The enzyme catalyses cytidine(1402) in 16S rRNA + S-adenosyl-L-methionine = N(4)-methylcytidine(1402) in 16S rRNA + S-adenosyl-L-homocysteine + H(+). Specifically methylates the N4 position of cytidine in position 1402 (C1402) of 16S rRNA. The protein is Ribosomal RNA small subunit methyltransferase H of Paracidovorax citrulli (strain AAC00-1) (Acidovorax citrulli).